A 71-amino-acid polypeptide reads, in one-letter code: Small ribosomal subunit protein bS21 (71 aa).

The segment at 39-71 is disordered; that stretch reads EKPTTVRKRAKAAAQKRHAKKLARENARRVRLY. Residues 43–59 show a composition bias toward basic residues; the sequence is TVRKRAKAAAQKRHAKK. A compositionally biased stretch (basic and acidic residues) spans 60–71; it reads LARENARRVRLY.

The protein belongs to the bacterial ribosomal protein bS21 family.

The protein is Small ribosomal subunit protein bS21 of Vibrio atlanticus (strain LGP32) (Vibrio splendidus (strain Mel32)).